Consider the following 209-residue polypeptide: Uridine kinase (209 aa).

G12–T19 provides a ligand contact to ATP.

This sequence belongs to the uridine kinase family.

It localises to the cytoplasm. It catalyses the reaction uridine + ATP = UMP + ADP + H(+). The catalysed reaction is cytidine + ATP = CMP + ADP + H(+). Its pathway is pyrimidine metabolism; CTP biosynthesis via salvage pathway; CTP from cytidine: step 1/3. It functions in the pathway pyrimidine metabolism; UMP biosynthesis via salvage pathway; UMP from uridine: step 1/1. This chain is Uridine kinase, found in Listeria monocytogenes serotype 4b (strain CLIP80459).